We begin with the raw amino-acid sequence, 85 residues long: Small ribosomal subunit protein uS17 (85 aa).

It belongs to the universal ribosomal protein uS17 family. In terms of assembly, part of the 30S ribosomal subunit.

Functionally, one of the primary rRNA binding proteins, it binds specifically to the 5'-end of 16S ribosomal RNA. The protein is Small ribosomal subunit protein uS17 of Mycoplasma pneumoniae (strain ATCC 29342 / M129 / Subtype 1) (Mycoplasmoides pneumoniae).